Reading from the N-terminus, the 206-residue chain is MCNEPATSDVALPDLDWAKGDGLLPVIVQDADTLRVLMLGYMNSQALEVTQRSRLVTFYSRSKQRLWTKGERSGHVLHLVAIDADCDADTLLVQARPRGPTCHLGRTSCFPAAPGQFLGALDALVAERERERPQDSYTTALFEQGVRRIAQKVGEEGVETALAGVVQADDALLDESADLLYHLIVLLRARGLSLADAVTVLEARHR.

The segment at Met1 to Phe117 is phosphoribosyl-AMP cyclohydrolase. Residues Leu118 to Arg206 form a phosphoribosyl-ATP pyrophosphohydrolase region.

In the N-terminal section; belongs to the PRA-CH family. This sequence in the C-terminal section; belongs to the PRA-PH family.

The protein localises to the cytoplasm. It catalyses the reaction 1-(5-phospho-beta-D-ribosyl)-ATP + H2O = 1-(5-phospho-beta-D-ribosyl)-5'-AMP + diphosphate + H(+). The enzyme catalyses 1-(5-phospho-beta-D-ribosyl)-5'-AMP + H2O = 1-(5-phospho-beta-D-ribosyl)-5-[(5-phospho-beta-D-ribosylamino)methylideneamino]imidazole-4-carboxamide. It participates in amino-acid biosynthesis; L-histidine biosynthesis; L-histidine from 5-phospho-alpha-D-ribose 1-diphosphate: step 2/9. It functions in the pathway amino-acid biosynthesis; L-histidine biosynthesis; L-histidine from 5-phospho-alpha-D-ribose 1-diphosphate: step 3/9. The chain is Histidine biosynthesis bifunctional protein HisIE (hisI) from Xylella fastidiosa (strain Temecula1 / ATCC 700964).